The sequence spans 600 residues: Alpha pinene synthase, chloroplastic (600 aa).

Residues 1-27 (MSSISMHAGPLNISAANNHHPSWDRRV) are disordered. The transit peptide at 1 to 31 (MSSISMHAGPLNISAANNHHPSWDRRVSKPR) directs the protein to the chloroplast. Residues Asp-354, Asp-358, Asp-498, and Glu-506 each coordinate Mg(2+). The short motif at 354–358 (DDVYD) is the DDXXD motif element.

Belongs to the terpene synthase family. Tpsa subfamily. Requires Mg(2+) as cofactor. It depends on Mn(2+) as a cofactor. In terms of tissue distribution, expressed at low levels in leaves.

The protein resides in the plastid. It is found in the chloroplast. The enzyme catalyses (2E)-geranyl diphosphate = alpha-pinene + diphosphate. Its pathway is secondary metabolite biosynthesis; terpenoid biosynthesis. Its function is as follows. Monoterpene synthase involved in the biosynthesis of volatile compounds widely used in aromatherapy and folk medicine, and present in culinary herbs. Mediates the conversion of (2E)-geranyl diphosphate (GPP) into alpha-pinene and, as minor compounds, into alpha-phellandrene, limonene and alpha-terpinolene. In Lavandula viridis (Green lavender), this protein is Alpha pinene synthase, chloroplastic.